A 309-amino-acid chain; its full sequence is Large ribosomal subunit protein mL45 (309 aa).

The protein belongs to the mitochondrion-specific ribosomal protein mL45 family. As to quaternary structure, component of the mitochondrial ribosome large subunit (39S) which comprises a 16S rRNA and about 50 distinct proteins.

Its subcellular location is the mitochondrion. Functionally, component of the mitochondrial large ribosomal subunit (mt-LSU). Within the mitochondrial ribosomes, required to direct the nascent polypeptide toward the tunnel exit and position the exit at a distance from the membrane surface. This Xenopus tropicalis (Western clawed frog) protein is Large ribosomal subunit protein mL45 (mrpl45).